The primary structure comprises 184 residues: Peptidyl-tRNA hydrolase (184 aa).

Tyrosine 14 provides a ligand contact to tRNA. Histidine 19 functions as the Proton acceptor in the catalytic mechanism. 2 residues coordinate tRNA: phenylalanine 60 and asparagine 62.

This sequence belongs to the PTH family. As to quaternary structure, monomer.

Its subcellular location is the cytoplasm. It carries out the reaction an N-acyl-L-alpha-aminoacyl-tRNA + H2O = an N-acyl-L-amino acid + a tRNA + H(+). In terms of biological role, hydrolyzes ribosome-free peptidyl-tRNAs (with 1 or more amino acids incorporated), which drop off the ribosome during protein synthesis, or as a result of ribosome stalling. Its function is as follows. Catalyzes the release of premature peptidyl moieties from peptidyl-tRNA molecules trapped in stalled 50S ribosomal subunits, and thus maintains levels of free tRNAs and 50S ribosomes. This Mesomycoplasma hyopneumoniae (strain 7448) (Mycoplasma hyopneumoniae) protein is Peptidyl-tRNA hydrolase.